The sequence spans 290 residues: Feruloyl esterase D (290 aa).

Residues 1-25 (MAGLHSRLTTFLLLLLSALPAIAAA) form the signal peptide. A disordered region spans residues 260-280 (HGGDHNPSQRDPGQNDPFAPR).

This sequence belongs to the serine esterase family.

Its subcellular location is the secreted. It carries out the reaction feruloyl-polysaccharide + H2O = ferulate + polysaccharide.. Functionally, involved in degradation of plant cell walls. Hydrolyzes the feruloyl-arabinose ester bond in arabinoxylans as well as the feruloyl-galactose and feruloyl-arabinose ester bonds in pectin. Active against methyl esters of ferulate (MFA), sinapate (MSA), caffeate (MCA) and p-coumarate (MpCA). The polypeptide is Feruloyl esterase D (Neurospora crassa (strain ATCC 24698 / 74-OR23-1A / CBS 708.71 / DSM 1257 / FGSC 987)).